A 582-amino-acid chain; its full sequence is L-fucose isomerase (582 aa).

Catalysis depends on proton acceptor residues glutamate 333 and aspartate 357. Mn(2+)-binding residues include glutamate 333, aspartate 357, and histidine 520.

Belongs to the L-fucose isomerase family. Requires Mn(2+) as cofactor.

The protein resides in the cytoplasm. It carries out the reaction L-fucose = L-fuculose. Its pathway is carbohydrate degradation; L-fucose degradation; L-lactaldehyde and glycerone phosphate from L-fucose: step 1/3. Its function is as follows. Converts the aldose L-fucose into the corresponding ketose L-fuculose. The polypeptide is L-fucose isomerase (Vibrio vulnificus (strain YJ016)).